We begin with the raw amino-acid sequence, 325 residues long: MDNKSVLLDGYGRRINYLRISVTDRCNLRCMYCMPQEGIPKRAHHDIMTLEELQEVAVALVELGIDKIRITGGEPLVRKGIVGLVRELSKCEGLNEITLTTNGLLLSEYARELKAAGLKRVNISLDTLNPQKFEYITRGGSLEKVLEGIKEAQSVGLTPIKLNTVLIGGFNDDEIEDFVALTVDNEIDVRFIELMPYRTGSRLWSLEKFISSDSVLKKVPSLEKIKSEDISSPAEYYRIPGALGKVGLINPITCKFCENCNRLRLTSDGKLKLCLHSDSEIDLAGPLRRGEDIRGIVLDEIKNKPREHSLEDGEYIKRDMFKIGG.

One can recognise a Radical SAM core domain in the interval 10-229 (GYGRRINYLR…PSLEKIKSED (220 aa)). Arg19 is a GTP binding site. [4Fe-4S] cluster-binding residues include Cys26 and Cys30. Position 32 (Tyr32) interacts with S-adenosyl-L-methionine. A [4Fe-4S] cluster-binding site is contributed by Cys33. Arg69 contacts GTP. Gly73 lines the S-adenosyl-L-methionine pocket. Thr100 lines the GTP pocket. Ser124 is a binding site for S-adenosyl-L-methionine. GTP is bound at residue Lys161. Met195 serves as a coordination point for S-adenosyl-L-methionine. Residues Cys257 and Cys260 each contribute to the [4Fe-4S] cluster site. 262-264 (RLR) contacts GTP. Residue Cys274 participates in [4Fe-4S] cluster binding.

The protein belongs to the radical SAM superfamily. MoaA family. As to quaternary structure, monomer and homodimer. It depends on [4Fe-4S] cluster as a cofactor.

It carries out the reaction GTP + AH2 + S-adenosyl-L-methionine = (8S)-3',8-cyclo-7,8-dihydroguanosine 5'-triphosphate + 5'-deoxyadenosine + L-methionine + A + H(+). It participates in cofactor biosynthesis; molybdopterin biosynthesis. Functionally, catalyzes the cyclization of GTP to (8S)-3',8-cyclo-7,8-dihydroguanosine 5'-triphosphate. The sequence is that of GTP 3',8-cyclase from Peptoclostridium acidaminophilum (Eubacterium acidaminophilum).